The sequence spans 312 residues: Ribosomal protein L11 methyltransferase (312 aa).

Residues Thr160, Gly181, Asp203, and Asn246 each coordinate S-adenosyl-L-methionine.

The protein belongs to the methyltransferase superfamily. PrmA family.

It localises to the cytoplasm. It carries out the reaction L-lysyl-[protein] + 3 S-adenosyl-L-methionine = N(6),N(6),N(6)-trimethyl-L-lysyl-[protein] + 3 S-adenosyl-L-homocysteine + 3 H(+). In terms of biological role, methylates ribosomal protein L11. The protein is Ribosomal protein L11 methyltransferase of Staphylococcus aureus (strain MRSA252).